The primary structure comprises 252 residues: Phosphomannomutase (252 aa).

D13 acts as the Nucleophile in catalysis. D13 and D15 together coordinate Mg(2+). D15 functions as the Proton donor/acceptor in the catalytic mechanism. The alpha-D-mannose 1-phosphate site is built by R22, R124, R135, R142, S180, and D182. Residues D208, Y220, and T225 each coordinate Mg(2+).

It belongs to the eukaryotic PMM family. In terms of assembly, homodimer. Mg(2+) serves as cofactor.

The protein localises to the cytoplasm. The enzyme catalyses alpha-D-mannose 1-phosphate = D-mannose 6-phosphate. It functions in the pathway nucleotide-sugar biosynthesis; GDP-alpha-D-mannose biosynthesis; alpha-D-mannose 1-phosphate from D-fructose 6-phosphate: step 2/2. Its function is as follows. Catalyzes the interconversion of mannose-6-phosphate to mannose-1-phosphate, the precursor for the synthesis of GDP-mannose. GDP-mannose is an essential sugar nucleotide for the synthesis of D-mannose-containing cell wall polysaccharides (galactomannans and glucomannans), glycolipids, glycoproteins and the antioxidant L-ascorbate. Can complement the yeast temperature-sensitive mutant sec53-6. The sequence is that of Phosphomannomutase from Solanum lycopersicum (Tomato).